A 351-amino-acid chain; its full sequence is Meiotically up-regulated gene 1 protein (351 aa).

It is found in the cytoplasm. In terms of biological role, required for correct meiotic chromosome segregation. The protein is Meiotically up-regulated gene 1 protein (mug1) of Schizosaccharomyces pombe (strain 972 / ATCC 24843) (Fission yeast).